We begin with the raw amino-acid sequence, 175 residues long: UPF0398 protein SGO_0588 (175 aa).

It belongs to the UPF0398 family.

The protein is UPF0398 protein SGO_0588 of Streptococcus gordonii (strain Challis / ATCC 35105 / BCRC 15272 / CH1 / DL1 / V288).